A 362-amino-acid chain; its full sequence is GDSL esterase/lipase At5g22810 (362 aa).

A signal peptide spans 1–28 (MGFSGIWLNLYVVFGSLMVFERMVVMVV). S44 (nucleophile) is an active-site residue. N159, N162, N264, and N329 each carry an N-linked (GlcNAc...) asparagine glycan. Active-site residues include D337 and H340.

The protein belongs to the 'GDSL' lipolytic enzyme family.

The protein resides in the secreted. This is GDSL esterase/lipase At5g22810 from Arabidopsis thaliana (Mouse-ear cress).